Here is a 275-residue protein sequence, read N- to C-terminus: Fos-related antigen 1 (275 aa).

Disordered stretches follow at residues 1-33 (MYRDFGEPGPSSGAGSAYGRPAQPQQAQTQTVQ) and 71-115 (TYPQ…VRRE). Residues 7 to 33 (EPGPSSGAGSAYGRPAQPQQAQTQTVQ) are compositionally biased toward low complexity. The 64-residue stretch at 107–170 (EERRRVRRER…ERLELVLEAH (64 aa)) folds into the bZIP domain. Positions 109–129 (RRRVRRERNKLAAAKCRNRRK) are basic motif. Positions 135–163 (LQAETDKLEDEKSGLQREIEELQKQKERL) are leucine-zipper. Positions 171 to 184 (RPICKIPEEDKKDT) are enriched in basic and acidic residues. Residues 171–275 (RPICKIPEED…PLGSPTLLAL (105 aa)) form a disordered region. 3 stretches are compositionally biased toward low complexity: residues 185–194 (GGTSSTSGAG), 219–237 (LHTPTLMTTPSLTPFTPSL), and 256–275 (SSSSGDPSSDPLGSPTLLAL). Serine 269 bears the Phosphoserine mark.

The protein belongs to the bZIP family. Fos subfamily. Heterodimer. Interacts with the BAF multiprotein chromatin-remodeling complex subunits SMARCB1 and SMARCD1. Interacts with ARID1A and JUN.

It is found in the nucleus. The sequence is that of Fos-related antigen 1 (Fosl1) from Rattus norvegicus (Rat).